Consider the following 180-residue polypeptide: Isopentenyl-diphosphate Delta-isomerase (180 aa).

Mn(2+) is bound by residues His22 and His28. In terms of domain architecture, Nudix hydrolase spans 26 to 160 (LKHKAVSVFA…PERFTPWLKI (135 aa)). Cys62 is a catalytic residue. Residue Cys62 participates in Mg(2+) binding. His64 is a Mn(2+) binding site. Glu82 contributes to the Mg(2+) binding site. Glu108 and Glu110 together coordinate Mn(2+). Glu110 is a catalytic residue.

It belongs to the IPP isomerase type 1 family. Requires Mg(2+) as cofactor. Mn(2+) is required as a cofactor.

Its subcellular location is the cytoplasm. The catalysed reaction is isopentenyl diphosphate = dimethylallyl diphosphate. It participates in isoprenoid biosynthesis; dimethylallyl diphosphate biosynthesis; dimethylallyl diphosphate from isopentenyl diphosphate: step 1/1. Catalyzes the 1,3-allylic rearrangement of the homoallylic substrate isopentenyl (IPP) to its highly electrophilic allylic isomer, dimethylallyl diphosphate (DMAPP). This is Isopentenyl-diphosphate Delta-isomerase from Ruegeria pomeroyi (strain ATCC 700808 / DSM 15171 / DSS-3) (Silicibacter pomeroyi).